The following is a 238-amino-acid chain: Ribonuclease PH (238 aa).

Phosphate is bound by residues R86 and 124–126 (GTR).

Belongs to the RNase PH family. As to quaternary structure, homohexameric ring arranged as a trimer of dimers.

The catalysed reaction is tRNA(n+1) + phosphate = tRNA(n) + a ribonucleoside 5'-diphosphate. Its function is as follows. Phosphorolytic 3'-5' exoribonuclease that plays an important role in tRNA 3'-end maturation. Removes nucleotide residues following the 3'-CCA terminus of tRNAs; can also add nucleotides to the ends of RNA molecules by using nucleoside diphosphates as substrates, but this may not be physiologically important. Probably plays a role in initiation of 16S rRNA degradation (leading to ribosome degradation) during starvation. This chain is Ribonuclease PH, found in Vibrio atlanticus (strain LGP32) (Vibrio splendidus (strain Mel32)).